The primary structure comprises 140 residues: Blasticidin-S deaminase (140 aa).

In terms of domain architecture, CMP/dCMP-type deaminase spans glutamine 8 to asparagine 140. Cysteine 59 provides a ligand contact to Zn(2+). Catalysis depends on glutamate 61, which acts as the Proton donor. Zn(2+) is bound by residues cysteine 100 and cysteine 103.

The protein belongs to the cytidine and deoxycytidylate deaminase family. The cofactor is Zn(2+).

It carries out the reaction blasticidin S + H2O + H(+) = deaminohydroxyblasticidin S + NH4(+). Its function is as follows. Catalyzes the deamination of the cytosine moiety of the antibiotics blasticidin S, cytomycin and acetylblasticidin S. The sequence is that of Blasticidin-S deaminase (bsr) from Bacillus cereus.